Consider the following 331-residue polypeptide: MRRKTRNFKHKTVKDNKVLTEGSDQESEKDNSQCCDPATNERVQAEKRQYVCTECGKAFSQSANLTVHERIHTGEKPYKCKECGKAFSHSSNLVVHRRIHTGLKPYTCSECGKSFSGKSHLIRHQGIHSGEKTYECKECGKAFSRSSGLISHHRVHTGEKPYSCIECGKAFSRSSNLTQHQRMHRGKKVYKCKECGKTCGSNTKIMDHQRIHTGEKPYECDECGKTFILRKTLNEHQRLHRREKPYKCNECGKAFTSNRNLVDHQRVHTGEKPYKCNECGKTFRQTSQVILHLRTHTKEKPYKCSECGKAYRYSSQLIQHQRKHNEEKETS.

Basic residues predominate over residues 1 to 12; sequence MRRKTRNFKHKT. Residues 1–35 are disordered; sequence MRRKTRNFKHKTVKDNKVLTEGSDQESEKDNSQCC. The residue at position 23 (Ser-23) is a Phosphoserine. 10 C2H2-type zinc fingers span residues 50–72, 78–100, 106–128, 134–156, 162–184, 190–212, 218–240, 246–268, 274–296, and 302–324; these read YVCTECGKAFSQSANLTVHERIH, YKCKECGKAFSHSSNLVVHRRIH, YTCSECGKSFSGKSHLIRHQGIH, YECKECGKAFSRSSGLISHHRVH, YSCIECGKAFSRSSNLTQHQRMH, YKCKECGKTCGSNTKIMDHQRIH, YECDECGKTFILRKTLNEHQRLH, YKCNECGKAFTSNRNLVDHQRVH, YKCNECGKTFRQTSQVILHLRTH, and YKCSECGKAYRYSSQLIQHQRKH.

The protein belongs to the krueppel C2H2-type zinc-finger protein family.

Its subcellular location is the nucleus. In terms of biological role, may be involved in transcriptional regulation. In Homo sapiens (Human), this protein is Zinc finger protein 660 (ZNF660).